The chain runs to 343 residues: Protein RecA (343 aa).

66–73 provides a ligand contact to ATP; sequence GPESSGKT.

The protein belongs to the RecA family.

It localises to the cytoplasm. Can catalyze the hydrolysis of ATP in the presence of single-stranded DNA, the ATP-dependent uptake of single-stranded DNA by duplex DNA, and the ATP-dependent hybridization of homologous single-stranded DNAs. It interacts with LexA causing its activation and leading to its autocatalytic cleavage. The chain is Protein RecA from Rickettsia conorii (strain ATCC VR-613 / Malish 7).